The chain runs to 738 residues: Phosphoribosylformylglycinamidine synthase subunit PurL (738 aa).

His41 is an active-site residue. ATP contacts are provided by Tyr44 and Lys83. Glu85 is a Mg(2+) binding site. Residues 86–89 (SHNH) and Arg108 each bind substrate. His87 functions as the Proton acceptor in the catalytic mechanism. Position 109 (Asp109) interacts with Mg(2+). Gln233 serves as a coordination point for substrate. Asp261 provides a ligand contact to Mg(2+). 305–307 (ESQ) contributes to the substrate binding site. The ATP site is built by Asp490 and Gly527. Position 528 (Asn528) interacts with Mg(2+). Ser530 is a binding site for substrate.

It belongs to the FGAMS family. In terms of assembly, monomer. Part of the FGAM synthase complex composed of 1 PurL, 1 PurQ and 2 PurS subunits.

The protein localises to the cytoplasm. It catalyses the reaction N(2)-formyl-N(1)-(5-phospho-beta-D-ribosyl)glycinamide + L-glutamine + ATP + H2O = 2-formamido-N(1)-(5-O-phospho-beta-D-ribosyl)acetamidine + L-glutamate + ADP + phosphate + H(+). Its pathway is purine metabolism; IMP biosynthesis via de novo pathway; 5-amino-1-(5-phospho-D-ribosyl)imidazole from N(2)-formyl-N(1)-(5-phospho-D-ribosyl)glycinamide: step 1/2. Part of the phosphoribosylformylglycinamidine synthase complex involved in the purines biosynthetic pathway. Catalyzes the ATP-dependent conversion of formylglycinamide ribonucleotide (FGAR) and glutamine to yield formylglycinamidine ribonucleotide (FGAM) and glutamate. The FGAM synthase complex is composed of three subunits. PurQ produces an ammonia molecule by converting glutamine to glutamate. PurL transfers the ammonia molecule to FGAR to form FGAM in an ATP-dependent manner. PurS interacts with PurQ and PurL and is thought to assist in the transfer of the ammonia molecule from PurQ to PurL. The chain is Phosphoribosylformylglycinamidine synthase subunit PurL from Alkaliphilus metalliredigens (strain QYMF).